We begin with the raw amino-acid sequence, 229 residues long: Ribonuclease 3 (229 aa).

An RNase III domain is found at 5 to 127; it reads LDRLERKLGY…LIGAIYQDAD (123 aa). Mg(2+) is bound at residue E40. Residue D44 is part of the active site. Residues D113 and E116 each contribute to the Mg(2+) site. Residue E116 is part of the active site. The DRBM domain occupies 154-224; that stretch reads DPKTRLQEFL…AAAALIALGV (71 aa).

This sequence belongs to the ribonuclease III family. In terms of assembly, homodimer. Requires Mg(2+) as cofactor.

Its subcellular location is the cytoplasm. The enzyme catalyses Endonucleolytic cleavage to 5'-phosphomonoester.. Digests double-stranded RNA. Involved in the processing of primary rRNA transcript to yield the immediate precursors to the large and small rRNAs (23S and 16S). Processes some mRNAs, and tRNAs when they are encoded in the rRNA operon. Processes pre-crRNA and tracrRNA of type II CRISPR loci if present in the organism. This Pseudomonas entomophila (strain L48) protein is Ribonuclease 3.